The sequence spans 242 residues: Small ribosomal subunit protein uS2 (242 aa).

It belongs to the universal ribosomal protein uS2 family.

The sequence is that of Small ribosomal subunit protein uS2 from Shewanella baltica (strain OS223).